The following is a 469-amino-acid chain: Properdin (469 aa).

Residues M1–S27 form the signal peptide. 7 consecutive TSP type-1 domains span residues D28–R76, S77–P134, M136–P191, H193–P255, A257–P313, D315–P377, and K379–K462. 3 cysteine pairs are disulfide-bonded: C32-C56, C43-C72, and C57-C75. 2 C-linked (Man) tryptophan glycosylation sites follow: W83 and W86. Disulfide bonds link C89-C127, C93-C133, C104-C111, C132-C170, C148-C184, C152-C190, and C163-C174. Residue T92 is glycosylated (O-linked (Fuc...) threonine). 3 C-linked (Man) tryptophan glycosylation sites follow: W139, W142, and W145. O-linked (Fuc...) threonine glycosylation is present at T151. C-linked (Man) tryptophan glycosylation is found at W196, W199, and W202. Intrachain disulfides connect C205–C248, C209–C254, and C224–C238. O-linked (Fuc...) serine glycosylation occurs at S208. Positions T219–C238 are disordered. C-linked (Man) tryptophan glycans are attached at residues W260 and W263. Cystine bridges form between C269–C306, C273–C312, and C284–C296. O-linked (Fuc...) threonine glycosylation occurs at T272. W321 and W324 each carry a C-linked (Man) tryptophan glycan. 3 disulfide bridges follow: C327–C370, C337–C376, and C350–C360. Positions R351 to R359 are interaction with Complement C3 beta chain. C-linked (Man) tryptophan glycosylation is found at W382, W385, and W388. Cystine bridges form between C391–C455, C395–C461, and C407–C439. N-linked (GlcNAc...) (complex) asparagine glycosylation occurs at N428.

As to quaternary structure, in plasma, properdin exists as dimers, trimers or tetramers in the relative proportions of 26:54:20. Interacts with the pro-C3-convertase enzyme complex (C3b-Bb) comprised of Complement C3 beta chain (C3b) and the Complement factor B Bb fragment (Bb), where it binds (via its TSP type-1 5 domain) with C3b and Bb. This interaction stabilizes the complex and allows it to become the active C3-convertase enzyme complex (C3b-Bb-FP). Interacts with C3b. Interacts with CFB.

The protein resides in the secreted. Functionally, a positive regulator of the alternate pathway (AP) of complement. It binds to and stabilizes the C3- and C5-convertase enzyme complexes. Inhibits CFI-CFH mediated degradation of Complement C3 beta chain (C3b). The chain is Properdin from Homo sapiens (Human).